We begin with the raw amino-acid sequence, 349 residues long: Glycerol-3-phosphate dehydrogenase [NAD(P)+] (349 aa).

3 residues coordinate NADPH: W16, R36, and K110. 3 residues coordinate sn-glycerol 3-phosphate: K110, G138, and T140. A142 serves as a coordination point for NADPH. Residues K193, D246, S256, R257, and N258 each coordinate sn-glycerol 3-phosphate. K193 functions as the Proton acceptor in the catalytic mechanism. NADPH is bound at residue R257. Positions 281 and 283 each coordinate NADPH.

It belongs to the NAD-dependent glycerol-3-phosphate dehydrogenase family.

The protein localises to the cytoplasm. The catalysed reaction is sn-glycerol 3-phosphate + NAD(+) = dihydroxyacetone phosphate + NADH + H(+). It carries out the reaction sn-glycerol 3-phosphate + NADP(+) = dihydroxyacetone phosphate + NADPH + H(+). The protein operates within membrane lipid metabolism; glycerophospholipid metabolism. Its function is as follows. Catalyzes the reduction of the glycolytic intermediate dihydroxyacetone phosphate (DHAP) to sn-glycerol 3-phosphate (G3P), the key precursor for phospholipid synthesis. The polypeptide is Glycerol-3-phosphate dehydrogenase [NAD(P)+] (Rhodospirillum rubrum (strain ATCC 11170 / ATH 1.1.1 / DSM 467 / LMG 4362 / NCIMB 8255 / S1)).